We begin with the raw amino-acid sequence, 236 residues long: Putative protein ZBED10P (236 aa).

The chain is Putative protein ZBED10P from Homo sapiens (Human).